The following is a 616-amino-acid chain: Chaperone protein HscA (616 aa).

It belongs to the heat shock protein 70 family.

Chaperone involved in the maturation of iron-sulfur cluster-containing proteins. Has a low intrinsic ATPase activity which is markedly stimulated by HscB. Involved in the maturation of IscU. This Salmonella newport (strain SL254) protein is Chaperone protein HscA.